The following is a 133-amino-acid chain: MWNDLAVYIIRCSGPGTRVVEVGAGRFLYVSDYIRKHSKVDLVLTDIKPSHGGIVRDDITSPRMEIYRGAALIYSIRPPAEIHSSLMRVADAVGARLIIKPLTGEDIVTERKMKLVNYGRTYFYEYIAEVRSR.

The protein belongs to the UPF0146 family.

The sequence is that of UPF0146 protein MTH_1000 from Methanothermobacter thermautotrophicus (strain ATCC 29096 / DSM 1053 / JCM 10044 / NBRC 100330 / Delta H) (Methanobacterium thermoautotrophicum).